Here is a 502-residue protein sequence, read N- to C-terminus: Lysine--tRNA ligase (502 aa).

Residues Glu-398 and Glu-405 each coordinate Mg(2+).

Belongs to the class-II aminoacyl-tRNA synthetase family. As to quaternary structure, homodimer. Requires Mg(2+) as cofactor.

It localises to the cytoplasm. It carries out the reaction tRNA(Lys) + L-lysine + ATP = L-lysyl-tRNA(Lys) + AMP + diphosphate. The sequence is that of Lysine--tRNA ligase (lysS) from Thermotoga maritima (strain ATCC 43589 / DSM 3109 / JCM 10099 / NBRC 100826 / MSB8).